Consider the following 343-residue polypeptide: tRNA N6-adenosine threonylcarbamoyltransferase (343 aa).

Residues histidine 120 and histidine 124 each coordinate Fe cation. Substrate is bound by residues 142 to 146, aspartate 175, glycine 188, aspartate 192, and asparagine 281; that span reads VVSGG. Aspartate 310 is a binding site for Fe cation.

Belongs to the KAE1 / TsaD family. Fe(2+) serves as cofactor.

It localises to the cytoplasm. It carries out the reaction L-threonylcarbamoyladenylate + adenosine(37) in tRNA = N(6)-L-threonylcarbamoyladenosine(37) in tRNA + AMP + H(+). Required for the formation of a threonylcarbamoyl group on adenosine at position 37 (t(6)A37) in tRNAs that read codons beginning with adenine. Is involved in the transfer of the threonylcarbamoyl moiety of threonylcarbamoyl-AMP (TC-AMP) to the N6 group of A37, together with TsaE and TsaB. TsaD likely plays a direct catalytic role in this reaction. The chain is tRNA N6-adenosine threonylcarbamoyltransferase from Bacillus thuringiensis (strain Al Hakam).